Reading from the N-terminus, the 510-residue chain is 2,3-bisphosphoglycerate-independent phosphoglycerate mutase (510 aa).

The Mn(2+) site is built by D15 and S65. S65 serves as the catalytic Phosphoserine intermediate. Substrate contacts are provided by residues H126, 155 to 156, R187, R193, 259 to 262, and K332; these read RD and RPDR. D399, H403, D440, H441, and H458 together coordinate Mn(2+).

It belongs to the BPG-independent phosphoglycerate mutase family. Mn(2+) is required as a cofactor.

It is found in the plastid. The protein resides in the chloroplast. It carries out the reaction (2R)-2-phosphoglycerate = (2R)-3-phosphoglycerate. Its pathway is carbohydrate degradation; glycolysis; pyruvate from D-glyceraldehyde 3-phosphate: step 3/5. In terms of biological role, catalyzes the interconversion of 2-phosphoglycerate and 3-phosphoglycerate. The chain is 2,3-bisphosphoglycerate-independent phosphoglycerate mutase from Antithamnion sp. (Red alga).